Reading from the N-terminus, the 156-residue chain is Ribonuclease pancreatic (156 aa).

Residues 1 to 28 (MALEKSLVLLPLLVLALLVLGWIQPSLG) form the signal peptide. Residues Lys-35 and Arg-38 each coordinate substrate. His-40 acts as the Proton acceptor in catalysis. Intrachain disulfides connect Cys-54–Cys-112, Cys-68–Cys-123, Cys-86–Cys-138, and Cys-93–Cys-100. N-linked (GlcNAc...) asparagine glycosylation is present at Asn-62. Substrate is bound at residue 69-73 (KPVNT). Asn-90 carries N-linked (GlcNAc...) asparagine glycosylation. Lys-94 lines the substrate pocket. Asn-104 carries N-linked (GlcNAc...) asparagine glycosylation. Arg-113 provides a ligand contact to substrate. Catalysis depends on His-147, which acts as the Proton donor.

This sequence belongs to the pancreatic ribonuclease family. As to quaternary structure, monomer. Interacts with and forms tight 1:1 complexes with RNH1. Dimerization of two such complexes may occur. Interaction with RNH1 inhibits this protein.

The protein resides in the secreted. The enzyme catalyses an [RNA] containing cytidine + H2O = an [RNA]-3'-cytidine-3'-phosphate + a 5'-hydroxy-ribonucleotide-3'-[RNA].. It catalyses the reaction an [RNA] containing uridine + H2O = an [RNA]-3'-uridine-3'-phosphate + a 5'-hydroxy-ribonucleotide-3'-[RNA].. Endonuclease that catalyzes the cleavage of RNA on the 3' side of pyrimidine nucleotides. Acts on single-stranded and double-stranded RNA. This chain is Ribonuclease pancreatic (RNASE1), found in Lemur catta (Ring-tailed lemur).